The sequence spans 95 residues: UPF0223 protein Bsph_1378 (95 aa).

It belongs to the UPF0223 family.

This is UPF0223 protein Bsph_1378 from Lysinibacillus sphaericus (strain C3-41).